The sequence spans 189 residues: Interferon alpha-8 (189 aa).

Positions 1–23 (MALTFYLLVALVVLSYKSFSSLG) are cleaved as a signal peptide. 2 cysteine pairs are disulfide-bonded: Cys24-Cys122 and Cys52-Cys162.

The protein belongs to the alpha/beta interferon family.

It is found in the secreted. In terms of biological role, produced by macrophages, IFN-alpha have antiviral activities. Interferon stimulates the production of two enzymes: a protein kinase and an oligoadenylate synthetase. The polypeptide is Interferon alpha-8 (IFNA8) (Homo sapiens (Human)).